A 291-amino-acid chain; its full sequence is Isopentenyl-diphosphate Delta-isomerase I, chloroplastic (291 aa).

Residues 1-52 (MSTASLFSFPSFHLRSLLPSLSSSSSSSSSRFAPPRLSPIRSPAPRTQLSVR) constitute a chloroplast transit peptide. N-acetylthreonine is present on S2. The span at 20–39 (SLSSSSSSSSSRFAPPRLSP) shows a compositional bias: low complexity. Residues 20 to 43 (SLSSSSSSSSSRFAPPRLSPIRSP) form a disordered region. K95 lines the substrate pocket. H99 and H111 together coordinate Mg(2+). One can recognise a Nudix hydrolase domain in the interval 109 to 261 (LLHRAFSVFL…AVKLSPWFRL (153 aa)). R130 and K134 together coordinate substrate. Residue C146 is part of the active site. Residue S147 coordinates substrate. Positions 147-177 (SHPLYRESELIEENVLGVRNAAQRKLFDELG) match the Nudix box motif. 2 residues coordinate Mg(2+): E206 and E208. E208 is an active-site residue.

This sequence belongs to the IPP isomerase type 1 family. Requires Mg(2+) as cofactor.

The protein localises to the plastid. The protein resides in the chloroplast. It localises to the cytoplasm. It carries out the reaction isopentenyl diphosphate = dimethylallyl diphosphate. It participates in isoprenoid biosynthesis; dimethylallyl diphosphate biosynthesis; dimethylallyl diphosphate from isopentenyl diphosphate: step 1/1. The protein operates within porphyrin-containing compound metabolism; chlorophyll biosynthesis. In terms of biological role, catalyzes the 1,3-allylic rearrangement of the homoallylic substrate isopentenyl (IPP) to its highly electrophilic allylic isomer, dimethylallyl diphosphate (DMAPP). This is Isopentenyl-diphosphate Delta-isomerase I, chloroplastic (IPP1) from Arabidopsis thaliana (Mouse-ear cress).